The chain runs to 548 residues: Chaperonin GroEL (548 aa).

Residues 30–33 (TLGP), lysine 51, 87–91 (DGTTT), glycine 415, and aspartate 495 contribute to the ATP site.

Belongs to the chaperonin (HSP60) family. In terms of assembly, forms a cylinder of 14 subunits composed of two heptameric rings stacked back-to-back. Interacts with the co-chaperonin GroES.

The protein localises to the cytoplasm. It catalyses the reaction ATP + H2O + a folded polypeptide = ADP + phosphate + an unfolded polypeptide.. Functionally, together with its co-chaperonin GroES, plays an essential role in assisting protein folding. The GroEL-GroES system forms a nano-cage that allows encapsulation of the non-native substrate proteins and provides a physical environment optimized to promote and accelerate protein folding. The protein is Chaperonin GroEL of Colwellia psychrerythraea (strain 34H / ATCC BAA-681) (Vibrio psychroerythus).